The chain runs to 1228 residues: Apical endosomal glycoprotein (1228 aa).

The first 21 residues, 1-21 (MCLPSHLLSTWVLFMAAQSLG), serve as a signal peptide directing secretion. Residues 23–1159 (TWLPNHCRSP…GEVAAPVSVP (1137 aa)) lie on the Extracellular side of the membrane. One can recognise an LDL-receptor class A 1; truncated domain in the interval 28–49 (HCRSPIKAVCNFVCDCGDCSDE). The MAM 1 domain occupies 65-223 (FTCNFEQDSC…DDVEFRDCGL (159 aa)). Asparagine 204 carries an N-linked (GlcNAc...) asparagine glycan. An LDL-receptor class A 2 domain is found at 229–267 (RCPLGHHHCQNKACVEPHQLCDGEDNCGDRSDEDPLICS). 3 disulfide bridges follow: cysteine 230-cysteine 242, cysteine 237-cysteine 255, and cysteine 249-cysteine 266. In terms of domain architecture, MAM 2 spans 270–426 (MATDFETGLG…DLIMSSHCML (157 aa)). Residues asparagine 290 and asparagine 340 are each glycosylated (N-linked (GlcNAc...) asparagine). Residues 457-492 (TCEPGHLSCGDLCVPPEQLCDFQKHCAEGEDEHKCG) form the LDL-receptor class A 3 domain. Disulfide bonds link cysteine 458–cysteine 469, cysteine 465–cysteine 482, and cysteine 476–cysteine 491. 4 consecutive MAM domains span residues 492–649 (GTTD…DCNP), 659–815 (LSCN…PCWA), 817–975 (KSCS…PCPQ), and 977–1144 (GSCD…QCKQ). N-linked (GlcNAc...) asparagine glycosylation is present at asparagine 641. Asparagine 841 carries an N-linked (GlcNAc...) asparagine glycan. The chain crosses the membrane as a helical span at residues 1160–1180 (VAVGGALLFFMFLVLMGLGGW). The Cytoplasmic portion of the chain corresponds to 1181–1228 (HWLQKQHCPGQRSTDAAASGFANILFNADHVTLPESITSNPQSPPDLA).

Its subcellular location is the membrane. Its function is as follows. Probably involved in the sorting and selective transport of receptors and ligands across polarized epithelia. The polypeptide is Apical endosomal glycoprotein (Mus musculus (Mouse)).